The following is a 136-amino-acid chain: Large-conductance mechanosensitive channel (136 aa).

Transmembrane regions (helical) follow at residues 9–29 (AFAS…GAAF) and 79–99 (IQTI…LKAI).

This sequence belongs to the MscL family. In terms of assembly, homopentamer.

It localises to the cell inner membrane. Its function is as follows. Channel that opens in response to stretch forces in the membrane lipid bilayer. May participate in the regulation of osmotic pressure changes within the cell. The sequence is that of Large-conductance mechanosensitive channel from Shewanella sp. (strain ANA-3).